A 451-amino-acid polypeptide reads, in one-letter code: Tubulin alpha-1A chain (451 aa).

Residues glycine 10, glutamine 11, alanine 12, and glutamine 15 each coordinate GTP. Residue lysine 40 is modified to N6-acetyllysine. GTP-binding residues include glutamate 71, alanine 99, serine 140, glycine 143, glycine 144, threonine 145, glycine 146, threonine 179, glutamate 183, asparagine 206, tyrosine 224, asparagine 228, and leucine 252. Glutamate 71 serves as a coordination point for Mg(2+). Glutamate 254 is an active-site residue. Tyrosine 282 is modified (3'-nitrotyrosine). Phosphoserine is present on serine 439. Residues glutamate 443 and glutamate 445 each carry the 5-glutamyl polyglutamate modification. At tyrosine 451 the chain carries 3'-nitrotyrosine.

Belongs to the tubulin family. In terms of assembly, heterodimer of alpha- and beta-tubulin. A typical microtubule is a hollow water-filled tube with an outer diameter of 25 nm and an inner diameter of 15 nM. Alpha-beta heterodimers associate head-to-tail to form protofilaments running lengthwise along the microtubule wall with the beta-tubulin subunit facing the microtubule plus end conferring a structural polarity. Microtubules usually have 13 protofilaments but different protofilament numbers can be found in some organisms and specialized cells. Interacts with gamma-tubulin; the interaction allows microtubules to nucleate from the gamma-tubulin ring complex (gTuRC). Nascent microtubule interacts (via alpha-tubulin MREC motif) with TTC5/STRAP; this interaction may result in tubulin mRNA-targeted degradation. Component of sperm flagellar doublet microtubules. Mg(2+) is required as a cofactor. In terms of processing, some glutamate residues at the C-terminus are polyglycylated, resulting in polyglycine chains on the gamma-carboxyl group. Glycylation is mainly limited to tubulin incorporated into axonemes (cilia and flagella) whereas glutamylation is prevalent in neuronal cells, centrioles, axonemes, and the mitotic spindle. Both modifications can coexist on the same protein on adjacent residues, and lowering polyglycylation levels increases polyglutamylation, and reciprocally. Cilia and flagella glycylation is required for their stability and maintenance. Flagella glycylation controls sperm motility. Post-translationally, some glutamate residues at the C-terminus are polyglutamylated, resulting in polyglutamate chains on the gamma-carboxyl group. Polyglutamylation plays a key role in microtubule severing by spastin (SPAST). SPAST preferentially recognizes and acts on microtubules decorated with short polyglutamate tails: severing activity by SPAST increases as the number of glutamates per tubulin rises from one to eight, but decreases beyond this glutamylation threshold. Glutamylation is also involved in cilia motility. Acetylation of alpha chains at Lys-40 is located inside the microtubule lumen. This modification has been correlated with increased microtubule stability, intracellular transport and ciliary assembly. In terms of processing, methylation of alpha chains at Lys-40 is found in mitotic microtubules and is required for normal mitosis and cytokinesis contributing to genomic stability. Post-translationally, nitration of Tyr-451 is irreversible and interferes with normal dynein intracellular distribution. Undergoes a tyrosination/detyrosination cycle, the cyclic removal and re-addition of a C-terminal tyrosine residue by the enzymes tubulin tyrosine carboxypeptidase (MATCAP1, VASH1 or VASH2) and tubulin tyrosine ligase (TTL), respectively. In terms of processing, tyrosination promotes microtubule interaction with CAP-Gly domain-containing proteins such as CLIP1, CLIP2 and DCTN1. Tyrosination regulates the initiation of dynein-dynactin motility via interaction with DCTN1, which brings the dynein-dynactin complex into contact with microtubules. In neurons, tyrosinated tubulins mediate the initiation of retrograde vesicle transport. Post-translationally, detyrosination is involved in metaphase plate congression by guiding chromosomes during mitosis: detyrosination promotes interaction with CENPE, promoting pole-proximal transport of chromosomes toward the equator. Detyrosination increases microtubules-dependent mechanotransduction in dystrophic cardiac and skeletal muscle. In cardiomyocytes, detyrosinated microtubules are required to resist to contractile compression during contraction: detyrosination promotes association with desmin (DES) at force-generating sarcomeres, leading to buckled microtubules and mechanical resistance to contraction.

Its subcellular location is the cytoplasm. It is found in the cytoskeleton. It localises to the flagellum axoneme. It carries out the reaction GTP + H2O = GDP + phosphate + H(+). Tubulin is the major constituent of microtubules, protein filaments consisting of alpha- and beta-tubulin heterodimers. Microtubules grow by the addition of GTP-tubulin dimers to the microtubule end, where a stabilizing cap forms. Below the cap, tubulin dimers are in GDP-bound state, owing to GTPase activity of alpha-tubulin. This is Tubulin alpha-1A chain (TUBA1A) from Sus scrofa (Pig).